The sequence spans 269 residues: Hydroxyethylthiazole kinase (269 aa).

Methionine 43 contacts substrate. Residues arginine 119 and serine 165 each coordinate ATP. Alanine 192 provides a ligand contact to substrate.

The protein belongs to the Thz kinase family. Requires Mg(2+) as cofactor.

It carries out the reaction 5-(2-hydroxyethyl)-4-methylthiazole + ATP = 4-methyl-5-(2-phosphooxyethyl)-thiazole + ADP + H(+). Its pathway is cofactor biosynthesis; thiamine diphosphate biosynthesis; 4-methyl-5-(2-phosphoethyl)-thiazole from 5-(2-hydroxyethyl)-4-methylthiazole: step 1/1. Functionally, catalyzes the phosphorylation of the hydroxyl group of 4-methyl-5-beta-hydroxyethylthiazole (THZ). The chain is Hydroxyethylthiazole kinase from Glaesserella parasuis serovar 5 (strain SH0165) (Haemophilus parasuis).